The sequence spans 150 residues: Large ribosomal subunit protein uL23 (150 aa).

The interval Met-1–Ser-24 is disordered. Residues Thr-7 to Lys-18 are compositionally biased toward low complexity.

Belongs to the universal ribosomal protein uL23 family.

The chain is Large ribosomal subunit protein uL23 (RPL23A) from Tetrahymena thermophila (strain SB210).